The sequence spans 318 residues: Endochitinase 3 (318 aa).

Residues 1–18 (EFTIFSLLFSLLLLNASA) form the signal peptide. In terms of domain architecture, Chitin-binding type-1 spans 19-60 (EQCGSQAGGALCAPGLCCSKFGWCGNTNDYCGPGNCQSQCPG). 7 disulfides stabilise this stretch: cysteine 21/cysteine 36, cysteine 30/cysteine 42, cysteine 35/cysteine 49, cysteine 54/cysteine 58, cysteine 89/cysteine 152, cysteine 164/cysteine 172, and cysteine 271/cysteine 303. Residue glutamate 134 is the Proton donor of the active site. Positions 312–318 (GLLVDTV) are cleaved as a propeptide — removed in mature form, vacuolar targeting.

It belongs to the glycosyl hydrolase 19 family. Chitinase class I subfamily.

It is found in the vacuole. The catalysed reaction is Random endo-hydrolysis of N-acetyl-beta-D-glucosaminide (1-&gt;4)-beta-linkages in chitin and chitodextrins.. Defense against chitin-containing fungal pathogens. In Solanum tuberosum (Potato), this protein is Endochitinase 3 (CHTB3).